The chain runs to 399 residues: MSGFQRIAVLGSTGSIGDSTLDVIARYPERFGVYALSAFSRMDKLAAQALATGAAVVVVPDNNAATRFRQAWSPSRALPEIRVGAQALADTAADAGCDTVMAAIVGIAGLPAALAAAQSGKRVLLANKEALVAAGSIFMSAVRQSGAELLPIDSEHNAIFQCLPQGERAGAPSTPAKTVRKLILTASGGPFRRHSPEDLQDVTPDQACAHPNWSMGRKISVDSATMLNKGLEVIEAHWLFAMPADRIEVLIHPQSVVHSLVEYDDGSVLAQMGQPDMRTPISYGLGFPERLDAGVSPLDLAKWGRLDFETPDLERFPCLRLSYEALRAGQAACVALNAANEIAVAAFLEGRLPYPWIARVIDAALEWQAGRPSVTLDHLTDVLALDAQVRAYAGNLGLA.

The NADPH site is built by Thr13, Gly14, Ser15, Ile16, and Asn127. Position 128 (Lys128) interacts with 1-deoxy-D-xylulose 5-phosphate. Glu129 contributes to the NADPH binding site. Asp153 provides a ligand contact to Mn(2+). Residues Ser154, Glu155, Ser187, and His210 each coordinate 1-deoxy-D-xylulose 5-phosphate. Glu155 is a Mn(2+) binding site. Position 216 (Gly216) interacts with NADPH. 4 residues coordinate 1-deoxy-D-xylulose 5-phosphate: Ser223, Asn228, Lys229, and Glu232. Glu232 lines the Mn(2+) pocket.

It belongs to the DXR family. Mg(2+) is required as a cofactor. Requires Mn(2+) as cofactor.

It catalyses the reaction 2-C-methyl-D-erythritol 4-phosphate + NADP(+) = 1-deoxy-D-xylulose 5-phosphate + NADPH + H(+). It participates in isoprenoid biosynthesis; isopentenyl diphosphate biosynthesis via DXP pathway; isopentenyl diphosphate from 1-deoxy-D-xylulose 5-phosphate: step 1/6. In terms of biological role, catalyzes the NADPH-dependent rearrangement and reduction of 1-deoxy-D-xylulose-5-phosphate (DXP) to 2-C-methyl-D-erythritol 4-phosphate (MEP). This Bordetella avium (strain 197N) protein is 1-deoxy-D-xylulose 5-phosphate reductoisomerase.